Reading from the N-terminus, the 443-residue chain is Glutamate--tRNA ligase 2 (443 aa).

Positions 7–17 match the 'HIGH' region motif; the sequence is PSPTGYLHVGN. The short motif at 236 to 240 is the 'KMSKS' region element; the sequence is KISKR. Lysine 239 is an ATP binding site.

Belongs to the class-I aminoacyl-tRNA synthetase family. Glutamate--tRNA ligase type 1 subfamily. Monomer.

It localises to the cytoplasm. The catalysed reaction is tRNA(Glu) + L-glutamate + ATP = L-glutamyl-tRNA(Glu) + AMP + diphosphate. Functionally, catalyzes the attachment of glutamate to tRNA(Glu) in a two-step reaction: glutamate is first activated by ATP to form Glu-AMP and then transferred to the acceptor end of tRNA(Glu). The protein is Glutamate--tRNA ligase 2 of Ehrlichia canis (strain Jake).